The following is a 207-amino-acid chain: Ras-related protein Rab-7a (207 aa).

An N-acetylthreonine modification is found at Thr-2. GTP is bound by residues Ser-17, Gly-18, Val-19, Gly-20, Lys-21, Thr-22, Ser-23, Ser-34, Asn-35, Tyr-37, and Thr-40. Thr-22 serves as a coordination point for Mg(2+). Positions 28–41 match the Switch 1 motif; sequence YVNKKFSNQYKATI. Mg(2+)-binding residues include Thr-40 and Asp-63. Residue Gly-66 participates in GTP binding. A Switch 2 motif is present at residues 67-82; the sequence is QERFQSLGVAFYRGAD. The residue at position 72 (Ser-72) is a Phosphoserine. GTP is bound by residues Asn-125, Lys-126, Asp-128, Ala-156, and Lys-157. Residues Lys-191 and Lys-194 each participate in a glycyl lysine isopeptide (Lys-Gly) (interchain with G-Cter in ubiquitin) cross-link. 2 S-geranylgeranyl cysteine lipidation sites follow: Cys-205 and Cys-207. Cys-207 is subject to Cysteine methyl ester.

It belongs to the small GTPase superfamily. Rab family. Interacts with NTRK1/TRKA. Interacts with RILP. Interacts with PSMA7. Interacts with RNF115. Interacts with and FYCO1. Interacts with the PIK3C3/VPS34-PIK3R4 complex. The GTP-bound form interacts with OSBPL1A. The GTP-bound form interacts with RAC1. Interacts with CLN3. Interacts with CHM, the substrate-binding subunit of the Rab geranylgeranyltransferase complex. Interacts with C9orf72. Does not interact with HPS4 and the BLOC-3 complex (heterodimer of HPS1 and HPS4). Interacts with CLN5. Interacts with PLEKHM1 (via N- and C-terminus). Interacts with PRPH; the interaction is direct. Interacts with VPS13A. The GDP-bound form interacts with RIMOC1. Interacts with the MON1A-CCZ1B complex and this interaction is enhanced in the presence of RIMOC1. Interacts with VPS39 and VPS41. Forms a ternary complex with LAMP2 and RUFY4; the interaction with LAMP2 is mediated by RUFY4 (via RUN and coiled coil domains). It depends on Mg(2+) as a cofactor. Deubiquitination at Lys-191 and Lys-194 by USP32. Post-translationally, phosphorylated at Ser-72 by LRRK1; phosphorylation is dependent on protein kinase C (PKC) activation of LRRK1. In terms of processing, prenylated. Prenylation is required for association with cellular membranes. Expressed in osteoclasts and in neurons.

It localises to the cytoplasmic vesicle. The protein resides in the phagosome membrane. Its subcellular location is the late endosome membrane. The protein localises to the lysosome membrane. It is found in the melanosome membrane. It localises to the autophagosome membrane. The protein resides in the lipid droplet. Its subcellular location is the endosome membrane. The protein localises to the mitochondrion membrane. The enzyme catalyses GTP + H2O = GDP + phosphate + H(+). With respect to regulation, regulated by guanine nucleotide exchange factors (GEFs) which promote the exchange of bound GDP for free GTP. Regulated by GTPase activating proteins (GAPs) which increase the GTP hydrolysis activity. Inhibited by GDP dissociation inhibitors (GDIs). In terms of biological role, the small GTPases Rab are key regulators of intracellular membrane trafficking, from the formation of transport vesicles to their fusion with membranes. Rabs cycle between an inactive GDP-bound form and an active GTP-bound form that is able to recruit to membranes different sets of downstream effectors directly responsible for vesicle formation, movement, tethering and fusion. In its active state, RAB7A binds to a variety of effector proteins playing a key role in the regulation of endo-lysosomal trafficking. Governs early-to-late endosomal maturation, microtubule minus-end as well as plus-end directed endosomal migration and positioning, and endosome-lysosome transport through different protein-protein interaction cascades. Also plays a central role in growth-factor-mediated cell signaling, nutrient-transporter-mediated nutrient uptake, neurotrophin transport in the axons of neurons and lipid metabolism. Also involved in regulation of some specialized endosomal membrane trafficking, such as maturation of melanosomes, pathogen-induced phagosomes (or vacuoles) and autophagosomes. Plays a role in the maturation and acidification of phagosomes that engulf pathogens, such as S.aureus and Mycobacteria. Plays a role in the fusion of phagosomes with lysosomes. In concert with RAC1, plays a role in regulating the formation of RBs (ruffled borders) in osteoclasts. Controls the endosomal trafficking and neurite outgrowth signaling of NTRK1/TRKA. Regulates the endocytic trafficking of the EGF-EGFR complex by regulating its lysosomal degradation. Involved in the ADRB2-stimulated lipolysis through lipophagy, a cytosolic lipase-independent autophagic pathway. Required for the exosomal release of SDCBP, CD63 and syndecan. Required for vesicular trafficking and cell surface expression of ACE2. May play a role in PRPH neuronal intermediate filament assembly. The polypeptide is Ras-related protein Rab-7a (Rattus norvegicus (Rat)).